The chain runs to 91 residues: DNA/RNA-binding protein Alba (91 aa).

Belongs to the histone-like Alba family.

The protein localises to the cytoplasm. It localises to the chromosome. Its function is as follows. Binds double-stranded DNA tightly but without sequence specificity. Involved in DNA compaction. This chain is DNA/RNA-binding protein Alba, found in Methanoculleus marisnigri (strain ATCC 35101 / DSM 1498 / JR1).